Here is an 815-residue protein sequence, read N- to C-terminus: Phenylalanine--tRNA ligase beta subunit (815 aa).

The tRNA-binding domain maps to 39 to 148 (SKELQKFEVA…KDAVVGDNFT (110 aa)). The region spanning 421-496 (PQKKPLDFSV…RIYGYDKIES (76 aa)) is the B5 domain. Residues Asp-474, Asp-480, Glu-483, and Glu-484 each coordinate Mg(2+). An FDX-ACB domain is found at 721–814 (SDYQANFRDY…ISQKFQGILR (94 aa)).

Belongs to the phenylalanyl-tRNA synthetase beta subunit family. Type 1 subfamily. As to quaternary structure, tetramer of two alpha and two beta subunits. Mg(2+) is required as a cofactor.

The protein localises to the cytoplasm. The catalysed reaction is tRNA(Phe) + L-phenylalanine + ATP = L-phenylalanyl-tRNA(Phe) + AMP + diphosphate + H(+). The chain is Phenylalanine--tRNA ligase beta subunit (pheT) from Rickettsia prowazekii (strain Madrid E).